Consider the following 238-residue polypeptide: Probable phosphatase phospho2 (238 aa).

D8 acts as the Nucleophile in catalysis. Positions 8 and 10 each coordinate Mg(2+). D10 (proton donor) is an active-site residue. Substrate contacts are provided by D19 and D99. Residue D179 coordinates Mg(2+).

Belongs to the HAD-like hydrolase superfamily. PHOSPHO family. Mg(2+) is required as a cofactor.

Functionally, probable phosphatase. In Xenopus tropicalis (Western clawed frog), this protein is Probable phosphatase phospho2 (phospho2).